Here is a 378-residue protein sequence, read N- to C-terminus: Ret finger protein-like 2 (378 aa).

Residues 101-143 (CPVCSDYLEKPMSLECGCAVCLKCINSLQKEPHGEDLLCCCSS) form an RING-type; degenerate zinc finger. In terms of domain architecture, B30.2/SPRY spans 168–362 (EPKLKKILQM…DQGVLSICPL (195 aa)).

Seems to be expressed in prostate and less abundantly in adult brain, fetal liver, and fetal kidney.

The chain is Ret finger protein-like 2 (RFPL2) from Homo sapiens (Human).